Reading from the N-terminus, the 268-residue chain is Tryptophan synthase alpha chain (268 aa).

Active-site proton acceptor residues include glutamate 49 and aspartate 60.

This sequence belongs to the TrpA family. In terms of assembly, tetramer of two alpha and two beta chains.

It catalyses the reaction (1S,2R)-1-C-(indol-3-yl)glycerol 3-phosphate + L-serine = D-glyceraldehyde 3-phosphate + L-tryptophan + H2O. Its pathway is amino-acid biosynthesis; L-tryptophan biosynthesis; L-tryptophan from chorismate: step 5/5. The alpha subunit is responsible for the aldol cleavage of indoleglycerol phosphate to indole and glyceraldehyde 3-phosphate. This chain is Tryptophan synthase alpha chain, found in Photorhabdus laumondii subsp. laumondii (strain DSM 15139 / CIP 105565 / TT01) (Photorhabdus luminescens subsp. laumondii).